Consider the following 161-residue polypeptide: Putative outer membrane protein YedS (161 aa).

A signal peptide spans 1–21 (MKRKVLAMLVPALLVAGAANA).

The protein belongs to the Gram-negative porin family.

It is found in the cell outer membrane. The chain is Putative outer membrane protein YedS (yedS) from Escherichia coli (strain K12).